The following is a 126-amino-acid chain: Large ribosomal subunit protein bL12 (126 aa).

It belongs to the bacterial ribosomal protein bL12 family. As to quaternary structure, homodimer. Part of the ribosomal stalk of the 50S ribosomal subunit. Forms a multimeric L10(L12)X complex, where L10 forms an elongated spine to which 2 to 4 L12 dimers bind in a sequential fashion. Binds GTP-bound translation factors.

Forms part of the ribosomal stalk which helps the ribosome interact with GTP-bound translation factors. Is thus essential for accurate translation. This chain is Large ribosomal subunit protein bL12, found in Trichlorobacter lovleyi (strain ATCC BAA-1151 / DSM 17278 / SZ) (Geobacter lovleyi).